The following is a 429-amino-acid chain: MPNQDILDLQPAHIRELQNRYERAMADHGYDSLLIASGAAPYRYRDDQAYVFQGFGPFLHWTGLAGQEHSWLLVRPGQKPVLWLYQPVDFWHANPVMAEEPWLEVVDVRSRQQSGAPELDSPGRLVVIGDPLVLDGVPGDHNPAALVAAVEEARVRKTPYEIECLAHANRIALAGHRAAREAFLAGDSEFGINLAYQQATGQREVEAPYHSIIGLNEHAGTLHYQYYDLKPPRRPRSLLIDAGVRYRGYCSDITRTTAGPDEPRFTALVHGLEKLQLRLCEMVSPGVDYVDIHRKAHLGIATLLSASGLVSGLADEAMVEQGITRAFFPHGIGHFLGIQVHDVAGKPTPSPEDAPFLRLTRTLEAGMVVTIEPGLYFIPSLLEPLLNGPEAQYLNRALIDELKSCGGIRIEDNVVVTAAGARNLTRECE.

The Mn(2+) site is built by aspartate 241, aspartate 252, histidine 334, glutamate 372, and glutamate 411.

It belongs to the peptidase M24B family. Bacterial-type prolidase subfamily. Mn(2+) is required as a cofactor.

The enzyme catalyses Xaa-L-Pro dipeptide + H2O = an L-alpha-amino acid + L-proline. Functionally, splits dipeptides with a prolyl residue in the C-terminal position. This Marinobacter nauticus (strain ATCC 700491 / DSM 11845 / VT8) (Marinobacter aquaeolei) protein is Xaa-Pro dipeptidase.